A 337-amino-acid chain; its full sequence is MNPSTNVDLTPFNTLALPGRAARYQKVTAPEALTAPELVKEKRFILGGGSNLVLTGDFDGLLLHMAIPGKRLVKEDAEAWFIEAGAGENWHDFVQWTLTRGWPGLENLSLIPGTVGAAPIQNIGAYGLEVADCLHSVTGWDFEKKALLTIDRDDCRFAYRDSLFKQQGWHLNGRIAITSVIFRLAKAWQPNMRYADIAQELATRKIAAPSAQDIATAVIAVRQRKLPDPAVTPNAGSFFHNPVVEAIQAEALADAYPTLPRYPQPDGRVKLAAGWLIEQAGWKGKALGPVGMYEKQALVLVNRGGATGQDVQRTMAAVQAAVREKFAVELTPEPIFL.

The region spanning 16–187 (ALPGRAARYQ…TSVIFRLAKA (172 aa)) is the FAD-binding PCMH-type domain. Arginine 160 is a catalytic residue. Serine 237 (proton donor) is an active-site residue. The active site involves glutamate 333.

FAD is required as a cofactor.

Its subcellular location is the cytoplasm. It carries out the reaction UDP-N-acetyl-alpha-D-muramate + NADP(+) = UDP-N-acetyl-3-O-(1-carboxyvinyl)-alpha-D-glucosamine + NADPH + H(+). It functions in the pathway cell wall biogenesis; peptidoglycan biosynthesis. Functionally, cell wall formation. This chain is UDP-N-acetylenolpyruvoylglucosamine reductase, found in Dechloromonas aromatica (strain RCB).